A 234-amino-acid chain; its full sequence is Ribosomal RNA small subunit methyltransferase G (234 aa).

Residues glycine 74, phenylalanine 79, 125-126 (AE), and arginine 144 contribute to the S-adenosyl-L-methionine site.

It belongs to the methyltransferase superfamily. RNA methyltransferase RsmG family.

It localises to the cytoplasm. In terms of biological role, specifically methylates the N7 position of a guanine in 16S rRNA. In Roseiflexus sp. (strain RS-1), this protein is Ribosomal RNA small subunit methyltransferase G.